Consider the following 4857-residue polypeptide: Dual E2 ubiquitin-conjugating enzyme/E3 ubiquitin-protein ligase BIRC6 (4857 aa).

2 WD repeats span residues 68 to 106 and 107 to 136; these read DGLH…QASA and LSAK…AVGC. One copy of the BIR repeat lies at 268–377; sequence PELGVGPGRS…LSVTLATSPA (110 aa). Residues Cys-328, Cys-331, His-348, and Cys-355 each contribute to the Zn(2+) site. Residues 379 to 426 form a WD 3 repeat; that stretch reads FPCTDGTDRISCFGSGSCPHFLAAATKRGKICIWDVSKLMKVHLKFEI. Disordered stretches follow at residues 465–498 and 579–618; these read DIPK…TSQK and ATSP…NSEL. Acidic residues predominate over residues 472 to 482; that stretch reads DSDDLLEDSDS. Phosphoserine is present on residues Ser-473, Ser-480, Ser-482, Ser-581, and Ser-590. WD repeat units follow at residues 501–720, 730–850, 851–927, and 928–966; these read MEVS…VQCL, NLCI…QHIK, DPQD…AKVE, and PPKK…FLQI. The span at 579–588 shows a compositional bias: polar residues; the sequence is ATSPISSNSH. The segment covering 595 to 618 has biased composition (polar residues); that stretch reads SRTQGESISEQGSTDNESCTNSEL. 2 disordered regions span residues 984–1004 and 1053–1073; these read LSKG…PSSP and QQQR…AAQH. The segment covering 992–1004 has biased composition (polar residues); it reads SEGSKPLSNPSSP. Residues 1056-1065 are compositionally biased toward basic residues; that stretch reads RRHPQHLHQQ. Thr-1710 carries the post-translational modification Phosphothreonine. Residues Ser-2222 and Ser-2955 each carry the phosphoserine modification. The segment at 2945-2973 is disordered; it reads SVTTNTTDSVSDEEKVSGGKDGNGSSTSV. An HRRAR loop; important for DIABLO/SMAC and HTRA2 binding region spans residues 3189 to 3193; the sequence is HRRAR. Residues 3819–4068 form the Ubiquitin-like domain; sequence DEKVTMFLQS…ESLLETCPIQ (250 aa). The tract at residues 3923-3949 is disordered; it reads QSKRAVSATPPRPPSRRGRTIPDKIGS. A Phosphothreonine modification is found at Thr-3931. Ser-4023 is modified (phosphoserine). The disordered stretch occupies residues 4260 to 4283; the sequence is RVPNSSVNQTEPQVSSSHNPTSTE. Positions 4261 to 4283 are enriched in polar residues; sequence VPNSSVNQTEPQVSSSHNPTSTE. The 168-residue stretch at 4573-4740 folds into the UBC core domain; the sequence is ARARRLAQEA…IRQATVKWAM (168 aa). Cys-4666 (glycyl thioester intermediate) is an active-site residue. Positions 4835-4857 are disordered; it reads EETLMHDQVKPSSSKELPSDFQL. Positions 4844–4857 are enriched in polar residues; the sequence is KPSSSKELPSDFQL.

Belongs to the BIRC6 family. In terms of assembly, homodimer; antiparallel. Interacts with RNF41. Interacts with DIABLO/SMAC, likely with higher affinity to SMAC dimer than SMAC monomer; this interaction blocks the substrate-binding site and inhibits the caspase inhibition activity of BIRC6. Interacts with KIF23/MKLP1, USP8/UBPY, BIRC5/survivin, MAP2K1/MEK1, RAB8A/RAB8, RAB11A/RAB11, PLK1, EXOC3/SEC6 and EXOC4/SEC8. Ubiquitinated; mediated by RNF41 E3 ligase and leads to proteasomal degradation, impairing inhibition of apoptosis. Deubiquitinated by USP8/UBPY. Autoubiquitinated; mediated by E1 ubiquitin activating enzyme UBA6. In terms of processing, proteolytically cleaved. Acts as substrate for CASP3, CASP6, CASP7, CASP9 and HTRA2. As to expression, expressed in brain cancer cells.

Its subcellular location is the golgi apparatus. The protein localises to the trans-Golgi network membrane. The protein resides in the endosome. It localises to the cytoplasm. It is found in the cytoskeleton. Its subcellular location is the spindle pole. The protein localises to the microtubule organizing center. The protein resides in the centrosome. It localises to the midbody. It is found in the midbody ring. It carries out the reaction S-ubiquitinyl-[E1 ubiquitin-activating enzyme]-L-cysteine + [acceptor protein]-L-lysine = [E1 ubiquitin-activating enzyme]-L-cysteine + N(6)-monoubiquitinyl-[acceptor protein]-L-lysine.. Inhibited by DIABLO/SMAC, which competes for the substrate-binding sites on BIRC6. BIRC6 inhibits caspases and protease by ubiquitination but BIRC6 itself is subjected to protease cleavage by CASP3, CASP6, CASP7, CASP9 and HTRA2 by protease cleavage. Its function is as follows. Anti-apoptotic protein known as inhibitor of apoptosis (IAP) which can regulate cell death by controlling caspases and by acting as an E3 ubiquitin-protein ligase. Unlike most IAPs, does not contain a RING domain and it is not a RING-type E3 ligase. Instead acts as a dual E2/E3 enzyme that combines ubiquitin conjugating (E2) and ubiquitin ligase (E3) activities in a single polypeptide. Ubiquitination is mediated by a non-canonical E1 ubiquitin activating enzyme UBA6. Ubiquitinates CASP3, CASP7 and CASP9 and inhibits their caspase activity; also ubiquitinates their procaspases but to a weaker extent. Ubiquitinates pro-apoptotic factors DIABLO/SMAC and HTRA2. DIABLO/SMAC antagonizes the caspase inhibition activity of BIRC6 by competing for the same binding sites as the caspases. Ubiquitinates the autophagy protein MAP1LC3B; this activity is also inhibited by DIABLO/SMAC. Important regulator for the final stages of cytokinesis. Crucial for normal vesicle targeting to the site of abscission, but also for the integrity of the midbody and the midbody ring, and its striking ubiquitin modification. This is Dual E2 ubiquitin-conjugating enzyme/E3 ubiquitin-protein ligase BIRC6 (BIRC6) from Homo sapiens (Human).